We begin with the raw amino-acid sequence, 528 residues long: G protein-coupled receptor 161 (528 aa).

Over 1-30 the chain is Extracellular; the sequence is MSLNSSLGHRKELSNLTEGASDQGGSGVTE. N-linked (GlcNAc...) asparagine glycosylation is found at Asn-4 and Asn-15. The helical transmembrane segment at 31 to 51 threads the bilayer; that stretch reads FVAIVIITVFVCLGNLVIVIT. The Cytoplasmic portion of the chain corresponds to 52 to 64; sequence LYRKSYLLTLSNK. A helical transmembrane segment spans residues 65–85; it reads FVFSLTLSNFLLSVLVLPFVV. Residues 86–101 lie on the Extracellular side of the membrane; sequence TSSIRREWIFGVVWCN. A disulfide bridge connects residues Cys-100 and Cys-178. An N-linked (GlcNAc...) asparagine glycan is attached at Asn-101. Residues 102-122 traverse the membrane as a helical segment; that stretch reads FSALLYLLISSASMLTLGIIA. Over 123-143 the chain is Cytoplasmic; that stretch reads VDRYYAVLYPMAYPMKITGNR. Residues 144-164 traverse the membrane as a helical segment; the sequence is AVMVLAYIWLHSLIGCLPPLF. The Extracellular portion of the chain corresponds to 165-190; sequence GWSSVEFDEFKWMCVAAWHREPGYTA. A helical membrane pass occupies residues 191–211; it reads FWQIWCALLPFLVMLVCYGFI. The Cytoplasmic portion of the chain corresponds to 212–269; the sequence is FRVARVKARKVHCGAVVTVEVGVQRTGRKNSSTSTSSSGSRKSAFQGVVYSANQCKAL. A helical membrane pass occupies residues 270–290; the sequence is VTILVVIGAFMVTWGPYMVVI. Over 291 to 306 the chain is Extracellular; that stretch reads TSEALWGKNCVSPTLE. The helical transmembrane segment at 307–327 threads the bilayer; that stretch reads TWATWLSFTSAICHPLIYGLW. Topologically, residues 328–528 are cytoplasmic; the sequence is NKTVRKELLG…EGDVLATEQR (201 aa).

It belongs to the G-protein coupled receptor 1 family.

The protein localises to the cell projection. Its subcellular location is the cilium membrane. It is found in the cell membrane. Functionally, key negative regulator of Shh signaling, which promotes the processing of GLI3 into GLI3R during neural tube development. Recruited by TULP3 and the IFT-A complex to primary cilia and acts as a regulator of the PKA-dependent basal repression machinery in Shh signaling by increasing cAMP levels, leading to promote the PKA-dependent processing of GLI3 into GLI3R and repress the Shh signaling. In presence of SHH, it is removed from primary cilia and is internalized into recycling endosomes, preventing its activity and allowing activation of the Shh signaling. Its ligand is unknown. This Bos taurus (Bovine) protein is G protein-coupled receptor 161 (GPR161).